The following is a 413-amino-acid chain: uncharacterized protein (413 aa).

Residues 14–34 (LLFFTVVIIPIFYYIYKIVYL) traverse the membrane as a helical segment. N46, N55, N103, N171, N179, N184, N220, N252, N260, N273, N362, N366, N374, N378, N393, and N408 each carry an N-linked (GlcNAc...) asparagine; by host glycan. The segment covering 250–263 (TKNSTETNSDNNSE) has biased composition (low complexity). The tract at residues 250 to 277 (TKNSTETNSDNNSEIVSETNSETNYSTP) is disordered. Polar residues predominate over residues 264-277 (IVSETNSETNYSTP).

The protein resides in the membrane. This is an uncharacterized protein from Acanthamoeba polyphaga (Amoeba).